Reading from the N-terminus, the 251-residue chain is 5'-nucleotidase SurE (251 aa).

Residues Asp8, Asp9, Ser39, and Asn91 each contribute to the a divalent metal cation site.

The protein belongs to the SurE nucleotidase family. A divalent metal cation is required as a cofactor.

Its subcellular location is the cytoplasm. It catalyses the reaction a ribonucleoside 5'-phosphate + H2O = a ribonucleoside + phosphate. Its function is as follows. Nucleotidase that shows phosphatase activity on nucleoside 5'-monophosphates. This Thioalkalivibrio sulfidiphilus (strain HL-EbGR7) protein is 5'-nucleotidase SurE.